Consider the following 453-residue polypeptide: Ankyrin repeat and SOCS box protein 16 (453 aa).

ANK repeat units lie at residues Cys-56–Met-85, Lys-110–Ala-139, Gly-142–Val-171, Glu-175–Val-204, Ser-209–Leu-238, Gln-242–Ala-279, and Lys-283–Val-312. Positions Phe-397–Gln-453 constitute an SOCS box domain.

This sequence belongs to the ankyrin SOCS box (ASB) family.

It participates in protein modification; protein ubiquitination. Functionally, may be a substrate-recognition component of a SCF-like ECS (Elongin-Cullin-SOCS-box protein) E3 ubiquitin-protein ligase complex which mediates the ubiquitination and subsequent proteasomal degradation of target proteins. The protein is Ankyrin repeat and SOCS box protein 16 (Asb16) of Mus musculus (Mouse).